Here is a 284-residue protein sequence, read N- to C-terminus: NAD kinase (284 aa).

The Proton acceptor role is filled by D65. Residues 65–66 (DG), 139–140 (ND), R150, R167, D169, and Q239 contribute to the NAD(+) site.

It belongs to the NAD kinase family. A divalent metal cation is required as a cofactor.

It localises to the cytoplasm. It catalyses the reaction NAD(+) + ATP = ADP + NADP(+) + H(+). Its function is as follows. Involved in the regulation of the intracellular balance of NAD and NADP, and is a key enzyme in the biosynthesis of NADP. Catalyzes specifically the phosphorylation on 2'-hydroxyl of the adenosine moiety of NAD to yield NADP. The protein is NAD kinase of Desulfatibacillum aliphaticivorans.